We begin with the raw amino-acid sequence, 429 residues long: Serine hydroxymethyltransferase (429 aa).

Residues Leu-126 and 130–132 (GHL) each bind (6S)-5,6,7,8-tetrahydrofolate. At Lys-235 the chain carries N6-(pyridoxal phosphate)lysine.

The protein belongs to the SHMT family. In terms of assembly, homodimer. It depends on pyridoxal 5'-phosphate as a cofactor.

The protein resides in the cytoplasm. The enzyme catalyses (6R)-5,10-methylene-5,6,7,8-tetrahydrofolate + glycine + H2O = (6S)-5,6,7,8-tetrahydrofolate + L-serine. It functions in the pathway one-carbon metabolism; tetrahydrofolate interconversion. The protein operates within amino-acid biosynthesis; glycine biosynthesis; glycine from L-serine: step 1/1. Functionally, catalyzes the reversible interconversion of serine and glycine with tetrahydrofolate (THF) serving as the one-carbon carrier. This reaction serves as the major source of one-carbon groups required for the biosynthesis of purines, thymidylate, methionine, and other important biomolecules. Also exhibits THF-independent aldolase activity toward beta-hydroxyamino acids, producing glycine and aldehydes, via a retro-aldol mechanism. This Zymomonas mobilis subsp. mobilis (strain ATCC 31821 / ZM4 / CP4) protein is Serine hydroxymethyltransferase.